The sequence spans 75 residues: ATP synthase subunit c (75 aa).

A run of 2 helical transmembrane segments spans residues 8 to 28 and 54 to 74; these read FIAI…VANI and AGMV…LMFV.

The protein belongs to the ATPase C chain family. In terms of assembly, F-type ATPases have 2 components, F(1) - the catalytic core - and F(0) - the membrane proton channel. F(1) has five subunits: alpha(3), beta(3), gamma(1), delta(1), epsilon(1). F(0) has three main subunits: a(1), b(2) and c(10-14). The alpha and beta chains form an alternating ring which encloses part of the gamma chain. F(1) is attached to F(0) by a central stalk formed by the gamma and epsilon chains, while a peripheral stalk is formed by the delta and b chains.

The protein resides in the cell membrane. F(1)F(0) ATP synthase produces ATP from ADP in the presence of a proton or sodium gradient. F-type ATPases consist of two structural domains, F(1) containing the extramembraneous catalytic core and F(0) containing the membrane proton channel, linked together by a central stalk and a peripheral stalk. During catalysis, ATP synthesis in the catalytic domain of F(1) is coupled via a rotary mechanism of the central stalk subunits to proton translocation. Functionally, key component of the F(0) channel; it plays a direct role in translocation across the membrane. A homomeric c-ring of between 10-14 subunits forms the central stalk rotor element with the F(1) delta and epsilon subunits. The chain is ATP synthase subunit c from Wolbachia sp. subsp. Brugia malayi (strain TRS).